The primary structure comprises 52 residues: Ornatin-C (52 aa).

The Cell attachment site motif lies at Arg42 to Asp44.

The protein belongs to the ornatin family.

It is found in the secreted. Its function is as follows. Potent inhibitor of fibrinogen interaction with platelet receptors expressed on glycoprotein IIb-IIIa complex. May prevent blood from clotting during either feeding and/or storage of ingested blood. This chain is Ornatin-C, found in Placobdella ornata (Turtle leech).